Here is a 179-residue protein sequence, read N- to C-terminus: Peptide deformylase 2 (179 aa).

Fe cation is bound by residues C101 and H143. E144 is an active-site residue. H147 serves as a coordination point for Fe cation.

This sequence belongs to the polypeptide deformylase family. Fe(2+) serves as cofactor.

The catalysed reaction is N-terminal N-formyl-L-methionyl-[peptide] + H2O = N-terminal L-methionyl-[peptide] + formate. Functionally, removes the formyl group from the N-terminal Met of newly synthesized proteins. Requires at least a dipeptide for an efficient rate of reaction. N-terminal L-methionine is a prerequisite for activity but the enzyme has broad specificity at other positions. This Pseudomonas syringae pv. tomato (strain ATCC BAA-871 / DC3000) protein is Peptide deformylase 2.